The sequence spans 341 residues: tRNA N6-adenosine threonylcarbamoyltransferase (341 aa).

Residues His111 and His115 each contribute to the Fe cation site. Substrate-binding positions include 134-138 (LVSGG), Asp167, Gly180, and Asn272. A Fe cation-binding site is contributed by Asp300.

The protein belongs to the KAE1 / TsaD family. Fe(2+) is required as a cofactor.

It is found in the cytoplasm. It catalyses the reaction L-threonylcarbamoyladenylate + adenosine(37) in tRNA = N(6)-L-threonylcarbamoyladenosine(37) in tRNA + AMP + H(+). Required for the formation of a threonylcarbamoyl group on adenosine at position 37 (t(6)A37) in tRNAs that read codons beginning with adenine. Is involved in the transfer of the threonylcarbamoyl moiety of threonylcarbamoyl-AMP (TC-AMP) to the N6 group of A37, together with TsaE and TsaB. TsaD likely plays a direct catalytic role in this reaction. The sequence is that of tRNA N6-adenosine threonylcarbamoyltransferase from Edwardsiella ictaluri (strain 93-146).